The primary structure comprises 487 residues: Polyamine oxidase 4 (487 aa).

FAD is bound by residues glutamate 53, arginine 61, valine 242, and glutamate 429. The short motif at cysteine 485–threonine 487 is the Microbody targeting signal element.

It belongs to the flavin monoamine oxidase family. FAD serves as cofactor. As to expression, widely expressed.

It localises to the peroxisome. The enzyme catalyses spermine + O2 + H2O = 3-aminopropanal + spermidine + H2O2. The catalysed reaction is norspermine + O2 + H2O = norspermidine + 3-aminopropanal + H2O2. It carries out the reaction thermospermine + O2 + H2O = 3-aminopropanal + spermidine + H2O2. Its pathway is amine and polyamine degradation; spermine degradation. Its function is as follows. Flavoenzyme involved in polyamine back-conversion. Catalyzes the oxidation of the secondary amino group of polyamines, such as spermine. Substrate preference is spermine &gt; thermospermine &gt; norspermine. No activity detected when putrescine, spermidine or N(1)-acetylspermidine are used as substrates. Plays an important role in the regulation of polyamine intracellular concentration. In Oryza sativa subsp. japonica (Rice), this protein is Polyamine oxidase 4.